The chain runs to 95 residues: Co-chaperonin GroES (95 aa).

It belongs to the GroES chaperonin family. As to quaternary structure, heptamer of 7 subunits arranged in a ring. Interacts with the chaperonin GroEL.

Its subcellular location is the cytoplasm. Functionally, together with the chaperonin GroEL, plays an essential role in assisting protein folding. The GroEL-GroES system forms a nano-cage that allows encapsulation of the non-native substrate proteins and provides a physical environment optimized to promote and accelerate protein folding. GroES binds to the apical surface of the GroEL ring, thereby capping the opening of the GroEL channel. This chain is Co-chaperonin GroES, found in Rickettsia bellii (strain RML369-C).